The chain runs to 804 residues: Leucine--tRNA ligase (804 aa).

The short motif at 40–51 (PYPSGAGLHVGH) is the 'HIGH' region element. The short motif at 576-580 (KMSKS) is the 'KMSKS' region element. Lysine 579 provides a ligand contact to ATP.

It belongs to the class-I aminoacyl-tRNA synthetase family.

The protein resides in the cytoplasm. It catalyses the reaction tRNA(Leu) + L-leucine + ATP = L-leucyl-tRNA(Leu) + AMP + diphosphate. The chain is Leucine--tRNA ligase from Staphylococcus saprophyticus subsp. saprophyticus (strain ATCC 15305 / DSM 20229 / NCIMB 8711 / NCTC 7292 / S-41).